The chain runs to 313 residues: Porphobilinogen deaminase (313 aa).

The residue at position 242 (C242) is an S-(dipyrrolylmethanemethyl)cysteine.

Belongs to the HMBS family. In terms of assembly, monomer. Dipyrromethane is required as a cofactor.

It carries out the reaction 4 porphobilinogen + H2O = hydroxymethylbilane + 4 NH4(+). The protein operates within porphyrin-containing compound metabolism; protoporphyrin-IX biosynthesis; coproporphyrinogen-III from 5-aminolevulinate: step 2/4. Tetrapolymerization of the monopyrrole PBG into the hydroxymethylbilane pre-uroporphyrinogen in several discrete steps. This is Porphobilinogen deaminase from Yersinia pseudotuberculosis serotype O:1b (strain IP 31758).